The following is a 307-amino-acid chain: Acetaldehyde dehydrogenase 1 (307 aa).

The active-site Acyl-thioester intermediate is cysteine 132. NAD(+) is bound by residues serine 163 to asparagine 171 and asparagine 274.

The protein belongs to the acetaldehyde dehydrogenase family.

It carries out the reaction acetaldehyde + NAD(+) + CoA = acetyl-CoA + NADH + H(+). This Comamonas testosteroni (Pseudomonas testosteroni) protein is Acetaldehyde dehydrogenase 1 (tesF).